Consider the following 228-residue polypeptide: Ribose-5-phosphate isomerase A (228 aa).

Substrate-binding positions include 29–32 (TGST), 85–88 (DGAD), and 98–101 (KGGG). Catalysis depends on Glu107, which acts as the Proton acceptor. Lys125 contributes to the substrate binding site.

Belongs to the ribose 5-phosphate isomerase family. As to quaternary structure, homodimer.

It carries out the reaction aldehydo-D-ribose 5-phosphate = D-ribulose 5-phosphate. It functions in the pathway carbohydrate degradation; pentose phosphate pathway; D-ribose 5-phosphate from D-ribulose 5-phosphate (non-oxidative stage): step 1/1. In terms of biological role, catalyzes the reversible conversion of ribose-5-phosphate to ribulose 5-phosphate. The chain is Ribose-5-phosphate isomerase A from Staphylococcus aureus (strain Mu50 / ATCC 700699).